A 163-amino-acid chain; its full sequence is Nucleotide-binding protein ESA_02876 (163 aa).

The protein belongs to the YajQ family.

Its function is as follows. Nucleotide-binding protein. The chain is Nucleotide-binding protein ESA_02876 from Cronobacter sakazakii (strain ATCC BAA-894) (Enterobacter sakazakii).